The following is a 561-amino-acid chain: Glutamine--tRNA ligase (561 aa).

The 'HIGH' region motif lies at Pro34–His44. ATP contacts are provided by residues Glu35–Asn37 and His41–Ser47. Residues Asp67 and Tyr212 each contribute to the L-glutamine site. ATP-binding positions include Thr231, Arg261–Leu262, and Met269–Lys271. A 'KMSKS' region motif is present at residues Val268–Arg272.

This sequence belongs to the class-I aminoacyl-tRNA synthetase family. As to quaternary structure, monomer.

It localises to the cytoplasm. It carries out the reaction tRNA(Gln) + L-glutamine + ATP = L-glutaminyl-tRNA(Gln) + AMP + diphosphate. This chain is Glutamine--tRNA ligase, found in Idiomarina loihiensis (strain ATCC BAA-735 / DSM 15497 / L2-TR).